A 395-amino-acid chain; its full sequence is Putative 8-amino-7-oxononanoate synthase (395 aa).

Arginine 23 is a substrate binding site. 110 to 111 (GY) contacts pyridoxal 5'-phosphate. A substrate-binding site is contributed by histidine 135. Residues serine 182, 207 to 210 (DEAH), and 239 to 242 (TFSK) each bind pyridoxal 5'-phosphate. N6-(pyridoxal phosphate)lysine is present on lysine 242. Position 356 (threonine 356) interacts with substrate.

It belongs to the class-II pyridoxal-phosphate-dependent aminotransferase family. BioF subfamily. As to quaternary structure, homodimer. Requires pyridoxal 5'-phosphate as cofactor.

It carries out the reaction 6-carboxyhexanoyl-[ACP] + L-alanine + H(+) = (8S)-8-amino-7-oxononanoate + holo-[ACP] + CO2. It functions in the pathway cofactor biosynthesis; biotin biosynthesis. Its function is as follows. Catalyzes the decarboxylative condensation of pimeloyl-[acyl-carrier protein] and L-alanine to produce 8-amino-7-oxononanoate (AON), [acyl-carrier protein], and carbon dioxide. This Bacillus cereus (strain ZK / E33L) protein is Putative 8-amino-7-oxononanoate synthase (bioF).